Reading from the N-terminus, the 252-residue chain is Ubiquinone biosynthesis O-methyltransferase (252 aa).

Residues arginine 51, glycine 70, aspartate 91, and methionine 136 each coordinate S-adenosyl-L-methionine.

Belongs to the methyltransferase superfamily. UbiG/COQ3 family.

The enzyme catalyses a 3-demethylubiquinol + S-adenosyl-L-methionine = a ubiquinol + S-adenosyl-L-homocysteine + H(+). It carries out the reaction a 3-(all-trans-polyprenyl)benzene-1,2-diol + S-adenosyl-L-methionine = a 2-methoxy-6-(all-trans-polyprenyl)phenol + S-adenosyl-L-homocysteine + H(+). It participates in cofactor biosynthesis; ubiquinone biosynthesis. Its function is as follows. O-methyltransferase that catalyzes the 2 O-methylation steps in the ubiquinone biosynthetic pathway. The protein is Ubiquinone biosynthesis O-methyltransferase of Albidiferax ferrireducens (strain ATCC BAA-621 / DSM 15236 / T118) (Rhodoferax ferrireducens).